Consider the following 362-residue polypeptide: Aminomethyltransferase (362 aa).

Belongs to the GcvT family. In terms of assembly, the glycine cleavage system is composed of four proteins: P, T, L and H.

The enzyme catalyses N(6)-[(R)-S(8)-aminomethyldihydrolipoyl]-L-lysyl-[protein] + (6S)-5,6,7,8-tetrahydrofolate = N(6)-[(R)-dihydrolipoyl]-L-lysyl-[protein] + (6R)-5,10-methylene-5,6,7,8-tetrahydrofolate + NH4(+). Functionally, the glycine cleavage system catalyzes the degradation of glycine. This is Aminomethyltransferase from Pseudothermotoga lettingae (strain ATCC BAA-301 / DSM 14385 / NBRC 107922 / TMO) (Thermotoga lettingae).